The following is a 476-amino-acid chain: Glycogen synthase (476 aa).

Residue Lys15 coordinates ADP-alpha-D-glucose.

This sequence belongs to the glycosyltransferase 1 family. Bacterial/plant glycogen synthase subfamily.

The enzyme catalyses [(1-&gt;4)-alpha-D-glucosyl](n) + ADP-alpha-D-glucose = [(1-&gt;4)-alpha-D-glucosyl](n+1) + ADP + H(+). It participates in glycan biosynthesis; glycogen biosynthesis. In terms of biological role, synthesizes alpha-1,4-glucan chains using ADP-glucose. The polypeptide is Glycogen synthase (Marinomonas sp. (strain MWYL1)).